A 272-amino-acid polypeptide reads, in one-letter code: Ribosomal RNA small subunit methyltransferase A (272 aa).

Positions 11, 13, 38, 59, 84, and 109 each coordinate S-adenosyl-L-methionine.

The protein belongs to the class I-like SAM-binding methyltransferase superfamily. rRNA adenine N(6)-methyltransferase family. RsmA subfamily.

Its subcellular location is the cytoplasm. It catalyses the reaction adenosine(1518)/adenosine(1519) in 16S rRNA + 4 S-adenosyl-L-methionine = N(6)-dimethyladenosine(1518)/N(6)-dimethyladenosine(1519) in 16S rRNA + 4 S-adenosyl-L-homocysteine + 4 H(+). Its function is as follows. Specifically dimethylates two adjacent adenosines (A1518 and A1519) in the loop of a conserved hairpin near the 3'-end of 16S rRNA in the 30S particle. May play a critical role in biogenesis of 30S subunits. The protein is Ribosomal RNA small subunit methyltransferase A of Rippkaea orientalis (strain PCC 8801 / RF-1) (Cyanothece sp. (strain PCC 8801)).